The sequence spans 83 residues: U4-theraphotoxin-Hhn1x (83 aa).

The N-terminal stretch at 1 to 20 (MTLIAILTCAAALVLHTTAA) is a signal peptide. Residues 21–46 (EELEAESQLMEVGMPDTELEAVDEER) constitute a propeptide that is removed on maturation. Intrachain disulfides connect C50/C64, C54/C75, and C69/C80.

This sequence belongs to the neurotoxin 12 (Hwtx-2) family. 02 (Hwtx-2) subfamily. As to expression, expressed by the venom gland.

It is found in the secreted. In terms of biological role, postsynaptic neurotoxin. This Cyriopagopus hainanus (Chinese bird spider) protein is U4-theraphotoxin-Hhn1x.